A 549-amino-acid chain; its full sequence is Neurofilament light polypeptide (549 aa).

S2 is subject to N-acetylserine. The interval S2–Q92 is head. T21 is a glycosylation site (O-linked (GlcNAc) threonine). An Asymmetric dimethylarginine; alternate modification is found at R23. The residue at position 23 (R23) is an Omega-N-methylarginine; alternate. The O-linked (GlcNAc) serine glycan is linked to S27. R30 is subject to Omega-N-methylarginine. Residue Y43 is modified to Phosphotyrosine. S56, S66, and S102 each carry phosphoserine. The IF rod domain maps to E89–L400. The tract at residues L93 to L124 is coil 1A. The linker 1 stretch occupies residues R125 to L137. The coil 1B stretch occupies residues Y138–L233. The interval Q234 to P252 is linker 12. Residues D253 to K271 are coil 2A. The segment at N272–F280 is linker 2. Positions K281–E396 are coil 2B. Residues A381–K391 are epitope; recognized by IF-specific monoclonal antibody. Positions E397–Y443 are tail, subdomain A. Residues E397–D549 form a tail region. Residues T444 to D549 form a tail, subdomain B (acidic) region. The tract at residues K462–D549 is disordered. Residues P471–K534 are compositionally biased toward acidic residues. Phosphoserine is present on S472. Phosphothreonine is present on T526. The segment covering K535–D549 has biased composition (basic and acidic residues).

The protein belongs to the intermediate filament family. As to quaternary structure, forms homodimers (in vitro). Forms heterodimers with NEFH or NEFM; which can further hetero-oligomerize (in vitro). Forms heterodimers with INA (in vitro). Interacts with ARHGEF28. Interacts with TRIM2. O-glycosylated. In terms of processing, phosphorylated in the head and rod regions by the PKC kinase PKN1, leading to the inhibition of polymerization. Post-translationally, ubiquitinated in the presence of TRIM2 and UBE2D1.

The protein resides in the cell projection. Its subcellular location is the axon. It is found in the cytoplasm. It localises to the cytoskeleton. In terms of biological role, neurofilaments usually contain three intermediate filament proteins: NEFL, NEFM, and NEFH which are involved in the maintenance of neuronal caliber. May additionally cooperate with the neuronal intermediate filament proteins PRPH and INA to form neuronal filamentous networks. This is Neurofilament light polypeptide (NEFL) from Sus scrofa (Pig).